The chain runs to 609 residues: MDLKAQLKAAVEQAAHQMGMPVDAAIQETPANKPGDYGTPAAFQMAKAAGGNPAQIAAQLAQTVVLPAGIRRVEATGPFLNFFLDAGAFVRGVVERPFELPKREGKVVIEHTSVNPNKELHVGHLRNVVLGDSMARILRAAGHTVEVQNYIDDTGRQAAESLFATQHYGRVWDGVQKYDQWLGEGYVQLNADPQKPELESGIMEIMHKLEAGELRPLVEQTVKAQLQTCFRLGARYDLLNWESDVVGSGFLAQAMNILEGSRYTSRPTEGKYAGAFIMDVSEFMPGLEEPNVVLVRSGGTAMYAAKDIGYQFWKFGLFEGMKFKPFMQDPEGNTIWTSAPDGQPDDERRFGHAQEVINVIDSRQDHPQTVVRSALGVAGEQEKEERSIHLSYAFVTLEGQTISGRKGIAVSADDAMDEAQKRALSVLQGINPDLAAREDAAEIARRIGLGAIRFAMLKAEPTRKIDFRWEQALALNGDTAPYVQYAAVRAANILKKAEEAGYATDGTGADWDALPDIDLVLAKQIAKLPEVAAQAARIHSPHVVAQYALDLATSFNAWYNAKTKQGKPATNVLQSEEGLREARLALIVRLRKAFEDTLDLIGIEIPAAM.

Positions 114–124 (VNPNKELHVGH) match the 'HIGH' region motif.

Belongs to the class-I aminoacyl-tRNA synthetase family. Monomer.

The protein localises to the cytoplasm. The enzyme catalyses tRNA(Arg) + L-arginine + ATP = L-arginyl-tRNA(Arg) + AMP + diphosphate. The sequence is that of Arginine--tRNA ligase from Deinococcus radiodurans (strain ATCC 13939 / DSM 20539 / JCM 16871 / CCUG 27074 / LMG 4051 / NBRC 15346 / NCIMB 9279 / VKM B-1422 / R1).